Consider the following 337-residue polypeptide: Serpentine receptor class alpha-17 (337 aa).

6 helical membrane-spanning segments follow: residues 28–48, 110–130, 155–175, 197–217, 247–267, and 282–302; these read LNFV…GLAI, ELYF…SLTF, IIQL…VPLV, FRTA…YLSV, CILI…VNYI, and IAPF…VIYF.

Belongs to the nematode receptor-like protein sra family.

The protein localises to the membrane. This chain is Serpentine receptor class alpha-17 (sra-17), found in Caenorhabditis elegans.